We begin with the raw amino-acid sequence, 50 residues long: Defensin-like protein 1 (50 aa).

4 disulfides stabilise this stretch: Cys-3-Cys-50, Cys-14-Cys-35, Cys-20-Cys-44, and Cys-24-Cys-46.

Belongs to the DEFL family.

It is found in the secreted. Possesses antimicrobial activity sensitive to inorganic cations. Has no inhibitory effect on insect gut alpha-amylase. Induces potential changes in fungal membranes and increased K+ efflux and Ca(2+) uptake. Interacts with sphingolipids and ergosterols found in fungal plasma membranes. This is Defensin-like protein 1 from Dahlia merckii (Bedding dahlia).